A 349-amino-acid chain; its full sequence is Cobalt-precorrin-5B C(1)-methyltransferase (349 aa).

The protein belongs to the CbiD family.

The catalysed reaction is Co-precorrin-5B + S-adenosyl-L-methionine = Co-precorrin-6A + S-adenosyl-L-homocysteine. It participates in cofactor biosynthesis; adenosylcobalamin biosynthesis; cob(II)yrinate a,c-diamide from sirohydrochlorin (anaerobic route): step 6/10. Its function is as follows. Catalyzes the methylation of C-1 in cobalt-precorrin-5B to form cobalt-precorrin-6A. The sequence is that of Cobalt-precorrin-5B C(1)-methyltransferase from Saccharolobus islandicus (strain Y.N.15.51 / Yellowstone #2) (Sulfolobus islandicus).